Reading from the N-terminus, the 529-residue chain is RE1-silencing transcription factor B (529 aa).

The C2H2-type 1 zinc-finger motif lies at 156 to 178 (FRCKPCQYKAESEEEFVHHIKIH). Positions 188 to 210 (SNKKAQGNEADSSISEESDVSKG) are disordered. C2H2-type zinc fingers lie at residues 212–234 (IQCD…LKHH), 244–266 (YKCT…LRNH), 272–294 (YTCS…IRTH), 300–322 (YQCI…MRTH), 328–351 (FKCE…RQVH), 357–379 (LTCP…VELH), and 385–408 (FLCP…KSRH). A disordered region spans residues 484-529 (LSSTQKKIKTSDARPEKILDKSRKSSCVKRKSDLLENSNDTQTSTV). Residues 492–506 (KTSDARPEKILDKSR) show a composition bias toward basic and acidic residues. The span at 518–529 (LENSNDTQTSTV) shows a compositional bias: polar residues.

The protein resides in the nucleus. It localises to the cytoplasm. Transcriptional repressor which binds neuron-restrictive silencer element (NRSE) and represses neuronal gene transcription in non-neuronal cells. Plays a role in the early development of the nervous system and is required for proper patterning of the neuroectoderm during gastrulation. This involves the correct speciation of the neuroepithelial domain and adequate development of the non-neural ectoderm. The protein is RE1-silencing transcription factor B (rest-b) of Xenopus laevis (African clawed frog).